The sequence spans 211 residues: tRNA (guanine-N(7)-)-methyltransferase (211 aa).

S-adenosyl-L-methionine-binding residues include Glu-43, Asp-68, and Asn-117. Residues Lys-121, Asp-153, and 190 to 193 (TEYE) each bind substrate.

The protein belongs to the class I-like SAM-binding methyltransferase superfamily. TrmB family.

It carries out the reaction guanosine(46) in tRNA + S-adenosyl-L-methionine = N(7)-methylguanosine(46) in tRNA + S-adenosyl-L-homocysteine. It participates in tRNA modification; N(7)-methylguanine-tRNA biosynthesis. Catalyzes the formation of N(7)-methylguanine at position 46 (m7G46) in tRNA. This Clostridium acetobutylicum (strain ATCC 824 / DSM 792 / JCM 1419 / IAM 19013 / LMG 5710 / NBRC 13948 / NRRL B-527 / VKM B-1787 / 2291 / W) protein is tRNA (guanine-N(7)-)-methyltransferase.